The chain runs to 378 residues: Pseudouridine kinase (378 aa).

Residues D12, T26, 37–41, V38, N137, and K166 each bind pseudouridine; that span reads GVARN. Residues S181 and T237 each contribute to the Mg(2+) site. T237, G239, G242, T298, L306, and G310 together coordinate ATP. D311 provides a ligand contact to pseudouridine.

The protein belongs to the carbohydrate kinase PfkB family. In terms of assembly, forms homodimers.

The protein localises to the peroxisome. The catalysed reaction is pseudouridine + ATP = psi-UMP + ADP + H(+). Catalyzes the phosphorylation of pseudouridine to pseudouridine 5'-phosphate (PsiMP). Catalyzes the first step in a pseudouridine degradation pathway. Acts together with the pseudouridine 5'-phosphate glycosidase PUMY in the peroxisome to prevent toxic pseudouridine monophosphate accumulation. The sequence is that of Pseudouridine kinase from Arabidopsis thaliana (Mouse-ear cress).